A 327-amino-acid polypeptide reads, in one-letter code: Dipeptide transport ATP-binding protein DppD (327 aa).

The region spanning 4–254 (LNVDKLSVHF…PRHPYTQALL (251 aa)) is the ABC transporter domain. 40 to 47 (GESGSGKS) contributes to the ATP binding site.

The protein belongs to the ABC transporter superfamily. In terms of assembly, the complex is composed of two ATP-binding proteins (DppD and DppF), two transmembrane proteins (DppB and DppC) and a solute-binding protein (DppA). MppA can replace DppA as binding protein for heme and ALA transport.

The protein resides in the cell inner membrane. It carries out the reaction a dipeptide(out) + ATP + H2O = a dipeptide(in) + ADP + phosphate + H(+). Its function is as follows. Part of the ABC transporter DppABCDF involved in dipeptide transport. Responsible for energy coupling to the transport system. When a foreign outer membrane heme receptor is expressed in E.coli, DppABCDF can also transport heme and its precursor, 5-aminolevulinic acid (ALA), from the periplasm into the cytoplasm. This chain is Dipeptide transport ATP-binding protein DppD (dppD), found in Escherichia coli (strain K12).